The following is a 56-amino-acid chain: Small ribosomal subunit protein bS21 (56 aa).

It belongs to the bacterial ribosomal protein bS21 family.

This is Small ribosomal subunit protein bS21 from Dictyoglomus thermophilum (strain ATCC 35947 / DSM 3960 / H-6-12).